Consider the following 178-residue polypeptide: Large ribosomal subunit protein uL5 (178 aa).

The residue at position 2 (A2) is an N-acetylalanine. K38 participates in a covalent cross-link: Glycyl lysine isopeptide (Lys-Gly) (interchain with G-Cter in SUMO2). Phosphothreonine is present on residues T44 and T47. Position 52 is an N6-acetyllysine; alternate (K52). K52 is covalently cross-linked (Glycyl lysine isopeptide (Lys-Gly) (interchain with G-Cter in SUMO2); alternate). K85 carries the post-translational modification N6-acetyllysine. K154 participates in a covalent cross-link: Glycyl lysine isopeptide (Lys-Gly) (interchain with G-Cter in SUMO2).

Belongs to the universal ribosomal protein uL5 family. In terms of assembly, component of the large ribosomal subunit (LSU). Part of the 5S RNP complex, which is a LSU subcomplex composed of the 5S RNA, RPL5 and RPL11. Component of a hexameric 5S RNP precursor complex, composed of 5S RNA, RRS1, RPF2/BXDC1, RPL5, RPL11 and HEATR3; this complex acts as a precursor for ribosome assembly. Interacts with PML. Interacts with MDM2 (via its RanBP2-type zinc finger domain); negatively regulates MDM2-mediated TP53 ubiquitination and degradation. Interacts with NOP53; retains RPL11 into the nucleolus.

The protein localises to the nucleus. The protein resides in the nucleolus. It localises to the cytoplasm. Its function is as follows. Component of the ribosome, a large ribonucleoprotein complex responsible for the synthesis of proteins in the cell. The small ribosomal subunit (SSU) binds messenger RNAs (mRNAs) and translates the encoded message by selecting cognate aminoacyl-transfer RNA (tRNA) molecules. The large subunit (LSU) contains the ribosomal catalytic site termed the peptidyl transferase center (PTC), which catalyzes the formation of peptide bonds, thereby polymerizing the amino acids delivered by tRNAs into a polypeptide chain. The nascent polypeptides leave the ribosome through a tunnel in the LSU and interact with protein factors that function in enzymatic processing, targeting, and the membrane insertion of nascent chains at the exit of the ribosomal tunnel. As part of the 5S RNP/5S ribonucleoprotein particle it is an essential component of the LSU, required for its formation and the maturation of rRNAs. It also couples ribosome biogenesis to p53/TP53 activation. As part of the 5S RNP it accumulates in the nucleoplasm and inhibits MDM2, when ribosome biogenesis is perturbed, mediating the stabilization and the activation of TP53. Promotes nucleolar location of PML. This chain is Large ribosomal subunit protein uL5 (RPL11), found in Oryctolagus cuniculus (Rabbit).